A 203-amino-acid polypeptide reads, in one-letter code: MTSPATNKPAAYDFLVKLLLIGDSGVGKSCLLLRFSDGSFTPSFIATIGIDFKIRTIELEGKRIKLQIWDTAGQERFRTITTAYYRGAMGILLVYDVTDEKSFGSIRNWIRNIEQHASDSVNKMLIGNKCDMTEKKVVDSSRGKSLADEYGIKFLETSAKNSVNVEEAFIGLAKDIKKRMIDTPNDPDHTICITPNNKKNTCC.

Residues 22-29, 70-74, and 128-131 each bind GTP; these read GDSGVGKS, DTAGQ, and NKCD. 2 S-geranylgeranyl cysteine lipidation sites follow: Cys-202 and Cys-203.

It belongs to the small GTPase superfamily. Rab family.

The protein resides in the cell membrane. In terms of biological role, protein transport. Probably involved in vesicular traffic. The sequence is that of Ras-related protein Rab-8B (rab8B) from Dictyostelium discoideum (Social amoeba).